Consider the following 538-residue polypeptide: Putative cysteine ligase BshC (538 aa).

Residues 460-484 adopt a coiled-coil conformation; it reads KINEQIELLERMLKRNVEKKHEVEL.

It belongs to the BshC family.

In terms of biological role, involved in bacillithiol (BSH) biosynthesis. May catalyze the last step of the pathway, the addition of cysteine to glucosamine malate (GlcN-Mal) to generate BSH. The chain is Putative cysteine ligase BshC from Bacillus cereus (strain ZK / E33L).